A 303-amino-acid chain; its full sequence is tRNA-cytidine(32) 2-sulfurtransferase (303 aa).

The short motif at 49–54 (SGGKDS) is the PP-loop motif element. C124, C127, and C215 together coordinate [4Fe-4S] cluster.

Belongs to the TtcA family. In terms of assembly, homodimer. It depends on Mg(2+) as a cofactor. [4Fe-4S] cluster is required as a cofactor.

It is found in the cytoplasm. The enzyme catalyses cytidine(32) in tRNA + S-sulfanyl-L-cysteinyl-[cysteine desulfurase] + AH2 + ATP = 2-thiocytidine(32) in tRNA + L-cysteinyl-[cysteine desulfurase] + A + AMP + diphosphate + H(+). It functions in the pathway tRNA modification. Functionally, catalyzes the ATP-dependent 2-thiolation of cytidine in position 32 of tRNA, to form 2-thiocytidine (s(2)C32). The sulfur atoms are provided by the cysteine/cysteine desulfurase (IscS) system. The polypeptide is tRNA-cytidine(32) 2-sulfurtransferase (Anaeromyxobacter sp. (strain Fw109-5)).